The primary structure comprises 587 residues: LAVAEQEASVTSLTSKRYILRFPALETLMLDDNRLSNPSCFASLAGLRRLKKLSLDENRIIRIPYLQQVQLSDESVDWNGGGGSPQKEPQFMLQSKPRMLEDSDEQLDYTVLPMKKDVDRTEVVFSSYPGFSTSETTKICSLPPIFEILPVKSLKARNQTLAPPFPELRYLSLAYNKIAKEDAVLPVALFPSLCEFVFHNNPLVAHTRGVPPLLKSFLQERLGIHLIRRKTVKPKHHVLMSRKESRKVKTEIPKVPKQPLVLHHPQVTTNKSPSKDMLEPEAELAEDLPTTKSTFVESEMPTESLEGLSLSRRTFVPLPPICSDSTVHSEETLSHLSDTAVRLSPEHPSDEDSKSTESIFLTQVSELPSSIIHKDDLELKEKDQKKPPTAPREVKVTRRKLTTASLPSKYHGYEELLTAKPDPAFIEPKGIQKNAQALQHMLKHPLLCHSSKPKLDTLQKPYVPKEKRAQRIPIPPPRKTRTQLLDDIFIRLRDPRNITEAPLGAVLHRRTERRLVNHKQYLEAKRLLKEFQARYRQLVSGSLRTVFGTTPLPPACPALSESQPKFGRFLEFMDEFCQEPTASDSQG.

LRR repeat units lie at residues 24–45 (ALET…ASLA) and 49–70 (RLKK…QQVQ). Disordered regions lie at residues 337 to 357 (SDTA…KSTE) and 373 to 396 (HKDD…EVKV). Over residues 344–355 (SPEHPSDEDSKS) the composition is skewed to basic and acidic residues. The stretch at 518-540 (HKQYLEAKRLLKEFQARYRQLVS) forms a coiled coil.

In terms of tissue distribution, expressed predominantly in testis.

It is found in the cytoplasm. Its subcellular location is the nucleus. In terms of biological role, may be involved in the response of cells to X-ray radiation. This Macaca fascicularis (Crab-eating macaque) protein is X-ray radiation resistance-associated protein 1.